The following is a 729-amino-acid chain: Fatty acid oxidation complex subunit alpha (729 aa).

The enoyl-CoA hydratase/isomerase stretch occupies residues 1–189 (MLYQSETLQL…KIGLVDAVVD (189 aa)). Asp296 serves as a coordination point for substrate. Positions 311–729 (AAPKLAAVLG…LLDVSTNQPA (419 aa)) are 3-hydroxyacyl-CoA dehydrogenase. Residues Met324, Asp343, 400–402 (VVE), Lys407, and Ser429 contribute to the NAD(+) site. His450 functions as the For 3-hydroxyacyl-CoA dehydrogenase activity in the catalytic mechanism. Asn453 serves as a coordination point for NAD(+). Substrate is bound by residues Asn500 and Tyr660.

It in the N-terminal section; belongs to the enoyl-CoA hydratase/isomerase family. This sequence in the C-terminal section; belongs to the 3-hydroxyacyl-CoA dehydrogenase family. Heterotetramer of two alpha chains (FadB) and two beta chains (FadA).

It catalyses the reaction a (3S)-3-hydroxyacyl-CoA + NAD(+) = a 3-oxoacyl-CoA + NADH + H(+). It carries out the reaction a (3S)-3-hydroxyacyl-CoA = a (2E)-enoyl-CoA + H2O. The enzyme catalyses a 4-saturated-(3S)-3-hydroxyacyl-CoA = a (3E)-enoyl-CoA + H2O. The catalysed reaction is (3S)-3-hydroxybutanoyl-CoA = (3R)-3-hydroxybutanoyl-CoA. It catalyses the reaction a (3Z)-enoyl-CoA = a 4-saturated (2E)-enoyl-CoA. It carries out the reaction a (3E)-enoyl-CoA = a 4-saturated (2E)-enoyl-CoA. It participates in lipid metabolism; fatty acid beta-oxidation. Involved in the aerobic and anaerobic degradation of long-chain fatty acids via beta-oxidation cycle. Catalyzes the formation of 3-oxoacyl-CoA from enoyl-CoA via L-3-hydroxyacyl-CoA. It can also use D-3-hydroxyacyl-CoA and cis-3-enoyl-CoA as substrate. This Yersinia pseudotuberculosis serotype IB (strain PB1/+) protein is Fatty acid oxidation complex subunit alpha.